The primary structure comprises 641 residues: E3 ubiquitin-protein ligase TRIM47 (641 aa).

The segment at C9–Q58 adopts an RING-type zinc-finger fold. T72 is modified (phosphothreonine). Positions Q81–Q123 are disordered. A compositionally biased stretch (pro residues) spans P103–P118. The segment at L181 to L221 adopts a B box-type zinc-finger fold. The Zn(2+) site is built by C186, H189, C208, and H213. Positions Q305–L325 form a coiled coil. S393 is modified (phosphoserine). The tract at residues D396–L416 is disordered. The B30.2/SPRY domain maps to S413–C634. S464 is subject to Phosphoserine. An Omega-N-methylarginine modification is found at R585. Phosphoserine is present on S591.

This sequence belongs to the TRIM/RBCC family. Expressed in hepatocytes, expression is increased in fatty livers.

It localises to the cytoplasm. It is found in the nucleus. It catalyses the reaction S-ubiquitinyl-[E2 ubiquitin-conjugating enzyme]-L-cysteine + [acceptor protein]-L-lysine = [E2 ubiquitin-conjugating enzyme]-L-cysteine + N(6)-ubiquitinyl-[acceptor protein]-L-lysine.. It participates in protein modification; protein ubiquitination. Its function is as follows. E3 ubiquitin-protein ligase that mediates the ubiquitination and proteasomal degradation of CYLD. This chain is E3 ubiquitin-protein ligase TRIM47, found in Mus musculus (Mouse).